The primary structure comprises 140 residues: Putative pre-16S rRNA nuclease (140 aa).

Belongs to the YqgF nuclease family.

It localises to the cytoplasm. Functionally, could be a nuclease involved in processing of the 5'-end of pre-16S rRNA. The polypeptide is Putative pre-16S rRNA nuclease (Vibrio vulnificus (strain CMCP6)).